Consider the following 244-residue polypeptide: Protein-L-isoaspartate O-methyltransferase (244 aa).

Positions 1–39 (MINPFSSFRWRHSSRSPAGIPEVEPQPPDASDPFASQRE) are disordered. Residue Ser-92 is part of the active site.

This sequence belongs to the methyltransferase superfamily. L-isoaspartyl/D-aspartyl protein methyltransferase family.

The protein localises to the cytoplasm. It catalyses the reaction [protein]-L-isoaspartate + S-adenosyl-L-methionine = [protein]-L-isoaspartate alpha-methyl ester + S-adenosyl-L-homocysteine. In terms of biological role, catalyzes the methyl esterification of L-isoaspartyl residues in peptides and proteins that result from spontaneous decomposition of normal L-aspartyl and L-asparaginyl residues. It plays a role in the repair and/or degradation of damaged proteins. The chain is Protein-L-isoaspartate O-methyltransferase from Synechococcus sp. (strain JA-2-3B'a(2-13)) (Cyanobacteria bacterium Yellowstone B-Prime).